A 327-amino-acid polypeptide reads, in one-letter code: Glycerol-3-phosphate dehydrogenase [NAD(P)+] (327 aa).

NADPH contacts are provided by Trp-16, Arg-36, and Lys-108. 3 residues coordinate sn-glycerol 3-phosphate: Lys-108, Gly-136, and Ser-138. NADPH is bound at residue Ala-140. Residues Lys-191, Asp-244, Ser-254, Arg-255, and Asn-256 each coordinate sn-glycerol 3-phosphate. The active-site Proton acceptor is the Lys-191. Arg-255 is an NADPH binding site. NADPH-binding residues include Leu-274 and Glu-276.

This sequence belongs to the NAD-dependent glycerol-3-phosphate dehydrogenase family.

It is found in the cytoplasm. The catalysed reaction is sn-glycerol 3-phosphate + NAD(+) = dihydroxyacetone phosphate + NADH + H(+). The enzyme catalyses sn-glycerol 3-phosphate + NADP(+) = dihydroxyacetone phosphate + NADPH + H(+). It functions in the pathway membrane lipid metabolism; glycerophospholipid metabolism. In terms of biological role, catalyzes the reduction of the glycolytic intermediate dihydroxyacetone phosphate (DHAP) to sn-glycerol 3-phosphate (G3P), the key precursor for phospholipid synthesis. This is Glycerol-3-phosphate dehydrogenase [NAD(P)+] from Bradyrhizobium sp. (strain ORS 278).